A 977-amino-acid chain; its full sequence is Probable UDP-N-acetylglucosamine--peptide N-acetylglucosaminyltransferase SEC (977 aa).

TPR repeat units follow at residues 2–35 (ISSK…SVSS), 53–86 (DDAR…NPLR), 87–120 (TDNL…QPQF), 121–154 (AECY…RPNF), 155–188 (ADAW…NPLL), 189–222 (VDAH…QPTF), 223–256 (AIAW…KPAF), 257–290 (PDAY…RPNS), 291–324 (AMAF…DPRF), 325–358 (LEAY…QPNH), 359–392 (PQAM…TTGL), 393–426 (SAPF…DPLA), 427–460 (ADAL…RPTM), and 461–494 (AEAH…RPDF). Residues 495-977 (PEATCNLLHT…ENDLEFPHDR (483 aa)) form a catalytic region region.

This sequence belongs to the glycosyltransferase 41 family. O-GlcNAc transferase subfamily. Interacts with TCP14 and TCP15. Interacts with ATX1.

The enzyme catalyses L-seryl-[protein] + UDP-N-acetyl-alpha-D-glucosamine = 3-O-(N-acetyl-beta-D-glucosaminyl)-L-seryl-[protein] + UDP + H(+). It catalyses the reaction L-threonyl-[protein] + UDP-N-acetyl-alpha-D-glucosamine = 3-O-(N-acetyl-beta-D-glucosaminyl)-L-threonyl-[protein] + UDP + H(+). It participates in protein modification; protein glycosylation. O-linked N-acetylglucosamine transferase (OGT) that mediates O-glycosylation of capsid protein (CP) of virus in case of infection by Plum pox virus. OGTs catalyze the addition of nucleotide-activated sugars directly onto the polypeptide through O-glycosidic linkage with the hydroxyl of serine or threonine. Probably acts by adding O-linked sugars to yet unknown proteins. Its OGT activity has been proved in vitro but not in vivo. Required with SPY for gamete and seed development. Mediates O-glycosylation of the DELLA protein RGA, a repressor of the gibberellin (GA) signaling pathway. O-glycosylation by SEC inhibits RGA binding to four of its interactors PIF3, PIF4, JAZ1, and BZR1 that are key regulators in light, jasmonate, and brassinosteroid signaling pathways, respectively. Activates ATX1 through O-GlcNAc modification to augment ATX1-mediated H3K4me3 histone epigenetic modification at FLC locus, thus preventing premature flowering. This is Probable UDP-N-acetylglucosamine--peptide N-acetylglucosaminyltransferase SEC from Arabidopsis thaliana (Mouse-ear cress).